A 557-amino-acid polypeptide reads, in one-letter code: Dihydroxy-acid dehydratase (557 aa).

Residue aspartate 78 participates in Mg(2+) binding. [2Fe-2S] cluster is bound at residue cysteine 119. Mg(2+) contacts are provided by aspartate 120 and lysine 121. Lysine 121 carries the post-translational modification N6-carboxylysine. A [2Fe-2S] cluster-binding site is contributed by cysteine 192. Glutamate 442 is a binding site for Mg(2+). Serine 468 serves as the catalytic Proton acceptor.

This sequence belongs to the IlvD/Edd family. Homodimer. [2Fe-2S] cluster serves as cofactor. Mg(2+) is required as a cofactor.

The enzyme catalyses (2R)-2,3-dihydroxy-3-methylbutanoate = 3-methyl-2-oxobutanoate + H2O. The catalysed reaction is (2R,3R)-2,3-dihydroxy-3-methylpentanoate = (S)-3-methyl-2-oxopentanoate + H2O. It functions in the pathway amino-acid biosynthesis; L-isoleucine biosynthesis; L-isoleucine from 2-oxobutanoate: step 3/4. The protein operates within amino-acid biosynthesis; L-valine biosynthesis; L-valine from pyruvate: step 3/4. Functionally, functions in the biosynthesis of branched-chain amino acids. Catalyzes the dehydration of (2R,3R)-2,3-dihydroxy-3-methylpentanoate (2,3-dihydroxy-3-methylvalerate) into 2-oxo-3-methylpentanoate (2-oxo-3-methylvalerate) and of (2R)-2,3-dihydroxy-3-methylbutanoate (2,3-dihydroxyisovalerate) into 2-oxo-3-methylbutanoate (2-oxoisovalerate), the penultimate precursor to L-isoleucine and L-valine, respectively. In Bacillus cereus (strain G9842), this protein is Dihydroxy-acid dehydratase.